The sequence spans 172 residues: 3-hydroxydecanoyl-[acyl-carrier-protein] dehydratase (172 aa).

His-71 is an active-site residue.

This sequence belongs to the thioester dehydratase family. FabA subfamily. Homodimer.

The protein resides in the cytoplasm. It catalyses the reaction a (3R)-hydroxyacyl-[ACP] = a (2E)-enoyl-[ACP] + H2O. It carries out the reaction (3R)-hydroxydecanoyl-[ACP] = (2E)-decenoyl-[ACP] + H2O. The enzyme catalyses (2E)-decenoyl-[ACP] = (3Z)-decenoyl-[ACP]. It functions in the pathway lipid metabolism; fatty acid biosynthesis. Functionally, necessary for the introduction of cis unsaturation into fatty acids. Catalyzes the dehydration of (3R)-3-hydroxydecanoyl-ACP to E-(2)-decenoyl-ACP and then its isomerization to Z-(3)-decenoyl-ACP. Can catalyze the dehydratase reaction for beta-hydroxyacyl-ACPs with saturated chain lengths up to 16:0, being most active on intermediate chain length. This is 3-hydroxydecanoyl-[acyl-carrier-protein] dehydratase from Escherichia coli (strain 55989 / EAEC).